Reading from the N-terminus, the 358-residue chain is Phosphoserine aminotransferase (358 aa).

Arg43 is an L-glutamate binding site. Pyridoxal 5'-phosphate is bound by residues Trp103, Thr153, Asp172, and Gln195. Lys196 carries the post-translational modification N6-(pyridoxal phosphate)lysine. Asn236–Thr237 serves as a coordination point for pyridoxal 5'-phosphate.

The protein belongs to the class-V pyridoxal-phosphate-dependent aminotransferase family. SerC subfamily. As to quaternary structure, homodimer. Requires pyridoxal 5'-phosphate as cofactor.

The protein localises to the cytoplasm. The catalysed reaction is O-phospho-L-serine + 2-oxoglutarate = 3-phosphooxypyruvate + L-glutamate. It catalyses the reaction 4-(phosphooxy)-L-threonine + 2-oxoglutarate = (R)-3-hydroxy-2-oxo-4-phosphooxybutanoate + L-glutamate. Its pathway is amino-acid biosynthesis; L-serine biosynthesis; L-serine from 3-phospho-D-glycerate: step 2/3. It participates in cofactor biosynthesis; pyridoxine 5'-phosphate biosynthesis; pyridoxine 5'-phosphate from D-erythrose 4-phosphate: step 3/5. Catalyzes the reversible conversion of 3-phosphohydroxypyruvate to phosphoserine and of 3-hydroxy-2-oxo-4-phosphonooxybutanoate to phosphohydroxythreonine. The polypeptide is Phosphoserine aminotransferase (Dichelobacter nodosus (strain VCS1703A)).